A 1592-amino-acid polypeptide reads, in one-letter code: MAFWLPQNIQKRLLLYVLQQISLFSNIDLSNLDVSIGSKSHFSFHDVNLSLDDLNIPNVQINEGIVDELVLKLTVSGGVEIDGSGLRFIMTPLYSSGSQELHSDFLVKSIQDLTNSMLQFSDPLTTYNRYKEDDISSSDSSSDLNSNIEASKPAANGSYTLQNMRNKALNVALAKLKIALKDVTIRFIVNDRDPSDNIVEVHLESIQLITTDANLRHINIENITISSIQKQAVPDSPVHPFNNDDLSQSVYLSKMEATSLYMSAMEEQSNEDPSEPQVTQEEQENDKCKESLMEINNLNIAFKGLSSVNDLRMSNIVIDIQDVHLAIHKIVEIKNSTLKNIIDIIVTHLDANESFSCQDSQSPSPDKQEPSALSSVDIKCIYLNLGQDITVILKSFKLEQKENNSLAFSLGSFYSNSSPLTISHKTKPLLTGEQTPQSIALNMGDELDIIISHDGIAHFFKIFQFVSKCMSFYQNKSKGMMPQIASDTKRTVQLTSKAVKLSLKFPYFLLCFQVSPFIYDSNRELYIELVDVFKKLPSRCTKILTMSSITISNLQSPLQLGSYDDTLKEALIYSSVHAIIKEVIFNEEYSGIVQLVEDISAFGKLFTDSKNSECTGKSKSKRGSFLQRSVRVLNSSRFVYKQSLSANFSLKIDSMKLKVSEIIGPQFGSVEALLSNNFFAITDDSQIVYFTKNLKVERKTPSLLEPQEIMSVVLNKAVNEPVLYVHRRANGKLKVIFNNIRIHYYARWLEILKKNIGPDNASSKDEPVAQKLSKKQPTSGFPWELKCLDCSLILHPFRLKSVMVIVLDNLTTGGSSFIPQAKLLSKANTLFLIDDYQNFKIQKDKNWPSLINFYAGQGFSAIGKIDTLNFLINKSDGALLLDCKIEQVGLSLCADSFQTFCQLCIDLKYPQTFPDEEKFRTQLKNPIDVFKDIDCDLFNSAFIRENNHQNDYDSVHLVDSFLDKTHEFNNGARSKLSSQGSYEMDSSSGTATGGILLPHESYLDSAQPKEEDTPPIASKEQERDVDIRGSIDIEKVVIKLFDGYDWKYTRKFIANTVEKLDKELSKAEASSSKSNVPQSEANIFDSIYISANKNNVTDLRRNLDGEIQGVQNSFSDVSKVNLRPSKHYKALIQLNKVHVNLKNYRVDEPDESNSDNSTDVLNRCVVSVYEFEIIDNVPTSTWNKFVTLLKHEPWPHSSPMFLLDLEFIRPIDFLQAVELVMQLNVAPLRLHVDQDTLEFLIRFLGFKDKRFELIDEYPDIVFIQKFSTNSIKLRLDYKPKKVDYAGLRSGQTSELMNFFTLDGSKIILKSVVLYGLNGFDELNNKLKAIWTPDITKKQLPGVLEGLAPVRSFMAIGSGVKTLVTVLMSEYRQEGHLGRSLKKGGNVFLKTTTGDFVKLGVKLTSGTQAILENTEELFGGVGSNGRVYDASKFGSADGADSDTAAVLDLDTLFEEDQLVGSKYSRIRDHEPTAVVIDMSSPGDHNEPTIVSLYADQPLDLPTGLKEAYSSLEKHMHIAYDAVWRAKGQMKDDKRGGPSAAAVYVARAAPVAIIRPLIGATEAVSKTLQGIANQVDKTHNEQINDKYKSNRTDS.

S236 carries the post-translational modification Phosphoserine. The segment at 264–286 (AMEEQSNEDPSEPQVTQEEQEND) is disordered.

This sequence belongs to the ATG2 family.

The protein resides in the preautophagosomal structure membrane. It is found in the endoplasmic reticulum membrane. The catalysed reaction is a 1,2-diacyl-sn-glycero-3-phosphocholine(in) = a 1,2-diacyl-sn-glycero-3-phosphocholine(out). The enzyme catalyses a 1,2-diacyl-sn-glycero-3-phospho-L-serine(in) = a 1,2-diacyl-sn-glycero-3-phospho-L-serine(out). It carries out the reaction a 1,2-diacyl-sn-glycero-3-phosphoethanolamine(in) = a 1,2-diacyl-sn-glycero-3-phosphoethanolamine(out). Its function is as follows. Lipid transfer protein required for autophagosome completion and peroxisome degradation. Tethers the edge of the isolation membrane (IM) to the endoplasmic reticulum (ER) and mediates direct lipid transfer from ER to IM for IM expansion. ATG2 binds to the ER exit site (ERES), which is the membrane source for autophagosome formation, using basic residues in its N-terminal region (NR) and to the expanding edge of the IM through its C-terminal region. The latter binding is assisted by an ATG18-PtdIns3P interaction. ATG2 then extracts phospholipids from the membrane source using its NR and transfers them to ATG9 to the IM through its predicted beta-sheet-rich structure for membrane expansion. The protein is Autophagy-related protein 2 (ATG2) of Saccharomyces cerevisiae (strain YJM789) (Baker's yeast).